A 119-amino-acid chain; its full sequence is Single-stranded DNA-binding protein (119 aa).

In terms of domain architecture, SSB spans 3–102; the sequence is INIVTLVGRV…IRVDQLELLG (100 aa).

Homotetramer.

The chain is Single-stranded DNA-binding protein (ssb1) from Anabaena variabilis.